The sequence spans 162 residues: Caveolin-2 (162 aa).

At 1 to 86 (MGLETEKADV…FEISKYVMYK (86 aa)) the chain is on the cytoplasmic side. Position 19 is a phosphotyrosine; by SRC (Y19). Residues S20 and S23 each carry the phosphoserine modification. Y27 is subject to Phosphotyrosine; by SRC. S36 is modified (phosphoserine). Residues 87–107 (FLTVFLAIPLAFLAGILFATL) constitute an intramembrane region (helical). The Cytoplasmic segment spans residues 108–162 (SCLHIWIIMPFVKTCLMVLPSVQTIWKSVTDAIIAPLCTSIGRSFSSVSLQLSQD).

Belongs to the caveolin family. In terms of assembly, monomer or homodimer. Interacts with CAV1; the interaction forms a stable heterooligomeric complex that is required for targeting to lipid rafts and for caveolae formation. Tyrosine phosphorylated forms do not form heterooligomers with the Tyr-19-phosphorylated form existing as a monomer or dimer, and the Tyr-27-form as a monomer only. Interacts (tyrosine phosphorylated form) with the SH2 domain-containing proteins, RASA1, NCK1 and SRC. Interacts (tyrosine phosphorylated form) with INSR, the interaction (Tyr-27-phosphorylated form) is increased on insulin stimulation. Interacts (Tyr-19 phosphorylated form) with MAPK1 (phosphorylated form); the interaction, promoted by insulin, leads to nuclear location and MAPK1 activation. Interacts with STAT3; the interaction is increased on insulin-induced tyrosine phosphorylation leading to STAT activation. Post-translationally, phosphorylated on serine and tyrosine residues. CAV1 promotes phosphorylation on Ser-23 which then targets the complex to the plasma membrane, lipid rafts and caveolae. Phosphorylation on Ser-36 appears to modulate mitosis in endothelial cells. Phosphorylation on both Tyr-19 and Tyr-27 is required for insulin-induced 'Ser-727' phosphorylation of STAT3 and its activation. Phosphorylation on Tyr-19 is required for insulin-induced phosphorylation of MAPK1 and DNA binding of STAT3. Tyrosine phosphorylation is induced by both EGF and insulin (By. similarity).

The protein localises to the nucleus. It localises to the cytoplasm. The protein resides in the golgi apparatus membrane. Its subcellular location is the cell membrane. It is found in the membrane. The protein localises to the caveola. In terms of biological role, may act as a scaffolding protein within caveolar membranes. Interacts directly with G-protein alpha subunits and can functionally regulate their activity. Acts as an accessory protein in conjunction with CAV1 in targeting to lipid rafts and driving caveolae formation. The Ser-36 phosphorylated form has a role in modulating mitosis in endothelial cells. Positive regulator of cellular mitogenesis of the MAPK signaling pathway. Required for the insulin-stimulated nuclear translocation and activation of MAPK1 and STAT3, and the subsequent regulation of cell cycle progression. The protein is Caveolin-2 (CAV2) of Plecturocebus moloch (Dusky titi monkey).